The chain runs to 118 residues: Large ribosomal subunit protein uL18 (118 aa).

This sequence belongs to the universal ribosomal protein uL18 family. As to quaternary structure, part of the 50S ribosomal subunit; part of the 5S rRNA/L5/L18/L25 subcomplex. Contacts the 5S and 23S rRNAs.

This is one of the proteins that bind and probably mediate the attachment of the 5S RNA into the large ribosomal subunit, where it forms part of the central protuberance. The chain is Large ribosomal subunit protein uL18 from Dichelobacter nodosus (strain VCS1703A).